The sequence spans 410 residues: Serine hydroxymethyltransferase (410 aa).

Residues Leu-119 and Gly-123 to Leu-125 each bind (6S)-5,6,7,8-tetrahydrofolate. Lys-228 is subject to N6-(pyridoxal phosphate)lysine. Ser-351–Phe-353 contributes to the (6S)-5,6,7,8-tetrahydrofolate binding site.

The protein belongs to the SHMT family. In terms of assembly, homodimer. Requires pyridoxal 5'-phosphate as cofactor.

The protein resides in the cytoplasm. It catalyses the reaction (6R)-5,10-methylene-5,6,7,8-tetrahydrofolate + glycine + H2O = (6S)-5,6,7,8-tetrahydrofolate + L-serine. Its pathway is one-carbon metabolism; tetrahydrofolate interconversion. It functions in the pathway amino-acid biosynthesis; glycine biosynthesis; glycine from L-serine: step 1/1. Its function is as follows. Catalyzes the reversible interconversion of serine and glycine with tetrahydrofolate (THF) serving as the one-carbon carrier. This reaction serves as the major source of one-carbon groups required for the biosynthesis of purines, thymidylate, methionine, and other important biomolecules. Also exhibits THF-independent aldolase activity toward beta-hydroxyamino acids, producing glycine and aldehydes, via a retro-aldol mechanism. This is Serine hydroxymethyltransferase from Alkaliphilus metalliredigens (strain QYMF).